A 356-amino-acid polypeptide reads, in one-letter code: Phosphoribosyl pyrophosphate synthase-associated protein 1 (356 aa).

M1 carries the N-acetylmethionine modification. N2 is modified (N-acetylproline). S177 and S215 each carry phosphoserine.

The protein belongs to the ribose-phosphate pyrophosphokinase family. In terms of assembly, binds to PRPS1 and PRPS2. Ubiquitous.

Its function is as follows. Seems to play a negative regulatory role in 5-phosphoribose 1-diphosphate synthesis. In Homo sapiens (Human), this protein is Phosphoribosyl pyrophosphate synthase-associated protein 1 (PRPSAP1).